Here is a 224-residue protein sequence, read N- to C-terminus: Large ribosomal subunit protein bL25 (224 aa).

A disordered region spans residues 195-224; sequence TVEEVDEAAEVDAADVPATEQGTDESKDGE. The segment covering 197 to 207 has biased composition (acidic residues); sequence EEVDEAAEVDA.

The protein belongs to the bacterial ribosomal protein bL25 family. CTC subfamily. As to quaternary structure, part of the 50S ribosomal subunit; part of the 5S rRNA/L5/L18/L25 subcomplex. Contacts the 5S rRNA. Binds to the 5S rRNA independently of L5 and L18.

Its function is as follows. This is one of the proteins that binds to the 5S RNA in the ribosome where it forms part of the central protuberance. This chain is Large ribosomal subunit protein bL25, found in Psychrobacter cryohalolentis (strain ATCC BAA-1226 / DSM 17306 / VKM B-2378 / K5).